A 67-amino-acid chain; its full sequence is Large ribosomal subunit protein uL29 (67 aa).

This sequence belongs to the universal ribosomal protein uL29 family.

The protein is Large ribosomal subunit protein uL29 of Methanothrix thermoacetophila (strain DSM 6194 / JCM 14653 / NBRC 101360 / PT) (Methanosaeta thermophila).